The chain runs to 699 residues: Elongation factor G 1 (699 aa).

The region spanning Glu8 to Ser290 is the tr-type G domain. Residues Ala17–Thr24, Asp88–His92, and Asn142–Asp145 each bind GTP.

This sequence belongs to the TRAFAC class translation factor GTPase superfamily. Classic translation factor GTPase family. EF-G/EF-2 subfamily.

It is found in the cytoplasm. Functionally, catalyzes the GTP-dependent ribosomal translocation step during translation elongation. During this step, the ribosome changes from the pre-translocational (PRE) to the post-translocational (POST) state as the newly formed A-site-bound peptidyl-tRNA and P-site-bound deacylated tRNA move to the P and E sites, respectively. Catalyzes the coordinated movement of the two tRNA molecules, the mRNA and conformational changes in the ribosome. The chain is Elongation factor G 1 from Vibrio parahaemolyticus serotype O3:K6 (strain RIMD 2210633).